A 236-amino-acid polypeptide reads, in one-letter code: 2,3,4,5-tetrahydropyridine-2,6-dicarboxylate N-acetyltransferase (236 aa).

Belongs to the transferase hexapeptide repeat family. DapH subfamily.

It catalyses the reaction (S)-2,3,4,5-tetrahydrodipicolinate + acetyl-CoA + H2O = L-2-acetamido-6-oxoheptanedioate + CoA. The protein operates within amino-acid biosynthesis; L-lysine biosynthesis via DAP pathway; LL-2,6-diaminopimelate from (S)-tetrahydrodipicolinate (acetylase route): step 1/3. Its function is as follows. Catalyzes the transfer of an acetyl group from acetyl-CoA to tetrahydrodipicolinate. This chain is 2,3,4,5-tetrahydropyridine-2,6-dicarboxylate N-acetyltransferase, found in Geobacillus kaustophilus (strain HTA426).